Consider the following 1085-residue polypeptide: Tudor domain-containing protein 7B (1085 aa).

Residues 3 to 76 (DEELVKKMVR…SGEVMCHATT (74 aa)) form the HTH OST-type 1 domain. Disordered stretches follow at residues 112–183 (APLV…PEKR), 200–228 (RNPQ…SAPY), and 297–341 (PAKE…KALS). The segment covering 203–216 (QHINVPSNLNENTT) has biased composition (polar residues). Residues 229–299 (SPKLVQSRLQ…PQELLLYPAK (71 aa)) enclose the HTH OST-type 2 domain. The segment covering 322–335 (TQRPSLTAKSNTPE) has biased composition (polar residues). In terms of domain architecture, HTH OST-type 3 spans 340–410 (LSPDLKQKLG…PKRAILYAKV (71 aa)). Tudor domains follow at residues 496–554 (SPSP…FYRL) and 686–743 (RPFC…LLRD). Positions 843 to 853 (NVPTATQTSSL) are enriched in polar residues. The segment at 843 to 888 (NVPTATQTSSLKTDRGDKALHTPKKTSPPLGSKSTPAGSPPERLSL) is disordered.

The protein resides in the cytoplasm. Component of specific cytoplasmic RNA granules involved in post-transcriptional regulation of specific genes: probably acts by binding to specific mRNAs and regulating their translation. Probably required during spermatogenesis. The protein is Tudor domain-containing protein 7B (tdrd7b) of Danio rerio (Zebrafish).